The following is an 895-amino-acid chain: Pyruvate dehydrogenase E1 component (895 aa).

Positions 1 to 20 (MSAVPEQILGASSANDADPQ) are disordered.

Homodimer. Part of the PDH complex, consisting of multiple copies of pyruvate dehydrogenase (E1), dihydrolipoamide acetyltransferase (E2) and lipoamide dehydrogenase (E3). Thiamine diphosphate is required as a cofactor.

The catalysed reaction is N(6)-[(R)-lipoyl]-L-lysyl-[protein] + pyruvate + H(+) = N(6)-[(R)-S(8)-acetyldihydrolipoyl]-L-lysyl-[protein] + CO2. Functionally, component of the pyruvate dehydrogenase (PDH) complex, that catalyzes the overall conversion of pyruvate to acetyl-CoA and CO(2). This Cupriavidus necator (strain ATCC 17699 / DSM 428 / KCTC 22496 / NCIMB 10442 / H16 / Stanier 337) (Ralstonia eutropha) protein is Pyruvate dehydrogenase E1 component (pdhA).